A 149-amino-acid chain; its full sequence is MALYEHVFLARQDITPQQVDALVEQYKGVIEANGGKVGRVENWGLKSLTYRIKKNRKAHYVLMDIDAPAPAVHEVERQMRINEDVLRYMTIAVGKHEEGPSAMMQKRDRDDRPRRDGDRPDRGGFGDRGPRPDRGDRDDRPRRPREDRA.

The disordered stretch occupies residues Val93–Ala149. A compositionally biased stretch (basic and acidic residues) spans Gly94–Ala149.

This sequence belongs to the bacterial ribosomal protein bS6 family.

Binds together with bS18 to 16S ribosomal RNA. The chain is Small ribosomal subunit protein bS6 from Rhizobium meliloti (strain 1021) (Ensifer meliloti).